The primary structure comprises 293 residues: 4-hydroxy-tetrahydrodipicolinate synthase (293 aa).

Residue Thr44 coordinates pyruvate. Residue Tyr132 is the Proton donor/acceptor of the active site. Residue Lys161 is the Schiff-base intermediate with substrate of the active site. Ile205 is a binding site for pyruvate.

Belongs to the DapA family. As to quaternary structure, homotetramer; dimer of dimers.

The protein localises to the cytoplasm. The enzyme catalyses L-aspartate 4-semialdehyde + pyruvate = (2S,4S)-4-hydroxy-2,3,4,5-tetrahydrodipicolinate + H2O + H(+). It participates in amino-acid biosynthesis; L-lysine biosynthesis via DAP pathway; (S)-tetrahydrodipicolinate from L-aspartate: step 3/4. In terms of biological role, catalyzes the condensation of (S)-aspartate-beta-semialdehyde [(S)-ASA] and pyruvate to 4-hydroxy-tetrahydrodipicolinate (HTPA). The polypeptide is 4-hydroxy-tetrahydrodipicolinate synthase (Thermosipho africanus (strain TCF52B)).